The primary structure comprises 134 residues: Galectin-1 (134 aa).

A1 bears the N-acetylalanine mark. The region spanning 4–134 is the Galectin domain; that stretch reads GVAVTNLNLK…GLAFKSITTE (131 aa). Residues 45-49, H53, N62, and 69-72 contribute to the a beta-D-galactoside site; these read HFNAR and WGSE.

As to quaternary structure, homodimer.

It is found in the secreted. The protein localises to the extracellular space. Its subcellular location is the extracellular matrix. Functionally, may regulate cell apoptosis and cell differentiation. Binds beta-galactoside and a wide array of complex carbohydrates. This Rhinella arenarum (Argentine common toad) protein is Galectin-1.